The following is a 492-amino-acid chain: Glutamate--tRNA ligase (492 aa).

Residues 13–23 carry the 'HIGH' region motif; that stretch reads PSPTGTPHVGM. The 'KMSKS' region motif lies at 257–261; that stretch reads KLSKR. Lys260 lines the ATP pocket.

The protein belongs to the class-I aminoacyl-tRNA synthetase family. Glutamate--tRNA ligase type 1 subfamily. As to quaternary structure, monomer.

The protein resides in the cytoplasm. It carries out the reaction tRNA(Glu) + L-glutamate + ATP = L-glutamyl-tRNA(Glu) + AMP + diphosphate. Functionally, catalyzes the attachment of glutamate to tRNA(Glu) in a two-step reaction: glutamate is first activated by ATP to form Glu-AMP and then transferred to the acceptor end of tRNA(Glu). This Mycolicibacterium paratuberculosis (strain ATCC BAA-968 / K-10) (Mycobacterium paratuberculosis) protein is Glutamate--tRNA ligase.